We begin with the raw amino-acid sequence, 505 residues long: Probable cytochrome P450 28c1 (505 aa).

Cys444 is a binding site for heme.

It belongs to the cytochrome P450 family. It depends on heme as a cofactor.

The protein localises to the endoplasmic reticulum membrane. Its subcellular location is the microsome membrane. May be involved in the metabolism of insect hormones and in the breakdown of synthetic insecticides. The chain is Probable cytochrome P450 28c1 (Cyp28c1) from Drosophila melanogaster (Fruit fly).